The primary structure comprises 550 residues: Chaperonin GroEL (550 aa).

ATP contacts are provided by residues 30–33 (TLGP), K51, 87–91 (DGTTT), G415, and D495.

This sequence belongs to the chaperonin (HSP60) family. As to quaternary structure, forms a cylinder of 14 subunits composed of two heptameric rings stacked back-to-back. Interacts with the co-chaperonin GroES.

The protein resides in the cytoplasm. It catalyses the reaction ATP + H2O + a folded polypeptide = ADP + phosphate + an unfolded polypeptide.. Its function is as follows. Together with its co-chaperonin GroES, plays an essential role in assisting protein folding. The GroEL-GroES system forms a nano-cage that allows encapsulation of the non-native substrate proteins and provides a physical environment optimized to promote and accelerate protein folding. The polypeptide is Chaperonin GroEL (Shewanella piezotolerans (strain WP3 / JCM 13877)).